We begin with the raw amino-acid sequence, 659 residues long: Crossover junction endonuclease MUS81 (659 aa).

A Helix-hairpin-helix motif 1 motif is present at residues Lys59 to Tyr78. The ERCC4 domain maps to Ile404–Asp503. Positions Thr585–Tyr622 match the Helix-hairpin-helix motif 2 motif.

It belongs to the XPF family. Forms a heterodimer with EME1A or EME1B. Mg(2+) serves as cofactor. Requires Ca(2+) as cofactor. In terms of tissue distribution, ubiquitous but preferentially expressed in young flowers buds, notably in anthers.

Its subcellular location is the nucleus. The protein resides in the nucleolus. Interacts with EME1 to form a DNA structure-specific endonuclease with substrate preference for branched DNA structures with a 5'-end at the branch nick. Typical substrates include 3'-flap structures, D-loops, replication forks, nicked Holliday junctions and also intact Holliday junctions with a reduced efficiency. May be required in mitosis for the processing of stalled or collapsed replication fork intermediates. Plays a role in DNA repair and in genotoxic stress-induced homologous recombination (HR) in somatic cells. Mediates a subset of meiotic recombination events that are insensitive to crossover interference. Together with SEND1, essential for the resolution of toxic replication structures to ensure genome stability, and to maintain telomere integrity and replication. The sequence is that of Crossover junction endonuclease MUS81 from Arabidopsis thaliana (Mouse-ear cress).